We begin with the raw amino-acid sequence, 416 residues long: Squalene synthase (416 aa).

Residues arginine 52 and arginine 77 each contribute to the NADP(+) site. 3 residues coordinate Mg(2+): aspartate 80, glutamate 83, and aspartate 84. Arginine 218 contacts NADP(+). The helical transmembrane segment at 284–304 (SVFNFCAIPQVMAIATLAACY) threads the bilayer. 2 residues coordinate NADP(+): lysine 315 and arginine 317. Residues 384 to 404 (PIYLSFIMLLAALSWQYLSTL) traverse the membrane as a helical segment.

The protein belongs to the phytoene/squalene synthase family. Mg(2+) is required as a cofactor.

It localises to the endoplasmic reticulum membrane. It catalyses the reaction 2 (2E,6E)-farnesyl diphosphate + NADPH + H(+) = squalene + 2 diphosphate + NADP(+). The catalysed reaction is 2 (2E,6E)-farnesyl diphosphate + NADH + H(+) = squalene + 2 diphosphate + NAD(+). It carries out the reaction presqualene diphosphate + NADH + H(+) = squalene + diphosphate + NAD(+). The enzyme catalyses presqualene diphosphate + NADPH + H(+) = squalene + diphosphate + NADP(+). It catalyses the reaction 2 (2E,6E)-farnesyl diphosphate = presqualene diphosphate + diphosphate. Its pathway is terpene metabolism; lanosterol biosynthesis; lanosterol from farnesyl diphosphate: step 1/3. Functionally, catalyzes the condensation of 2 farnesyl pyrophosphate (FPP) moieties to form squalene. Proceeds in two distinct steps. In the first half-reaction, two molecules of FPP react to form the stable presqualene diphosphate intermediate (PSQPP), with concomitant release of a proton and a molecule of inorganic diphosphate. In the second half-reaction, PSQPP undergoes heterolysis, isomerization, and reduction with NADPH or NADH to form squalene. It is the first committed enzyme of the sterol biosynthesis pathway. This chain is Squalene synthase (Fdft1), found in Rattus norvegicus (Rat).